A 558-amino-acid chain; its full sequence is 5-aminolevulinate synthase, mitochondrial (558 aa).

The transit peptide at 1-25 directs the protein to the mitochondrion; that stretch reads MERVVKLAAKHCPFVSKADPSALRR. The segment at 103–124 is disordered; it reads TTTPVTKKHQMPKHYASDLNGV. Substrate is bound by residues Arg-152, Ser-265, and Lys-284. Positions 317, 345, and 374 each coordinate pyridoxal 5'-phosphate. Residue Lys-377 is part of the active site. Lys-377 carries the N6-(pyridoxal phosphate)lysine modification. Pyridoxal 5'-phosphate-binding residues include Thr-406 and Thr-407. Thr-492 lines the substrate pocket.

It belongs to the class-II pyridoxal-phosphate-dependent aminotransferase family. Homodimer. It depends on pyridoxal 5'-phosphate as a cofactor.

The protein localises to the mitochondrion matrix. It catalyses the reaction succinyl-CoA + glycine + H(+) = 5-aminolevulinate + CO2 + CoA. The protein operates within porphyrin-containing compound metabolism; protoporphyrin-IX biosynthesis; 5-aminolevulinate from glycine: step 1/1. Catalyzes the synthesis of 5-aminolevulinate (ALA) from succinyl-CoA and glycine, the first and rate-limiting step in heme biosynthesis. The polypeptide is 5-aminolevulinate synthase, mitochondrial (Schizosaccharomyces pombe (strain 972 / ATCC 24843) (Fission yeast)).